A 113-amino-acid chain; its full sequence is Bactofilin BacN (113 aa).

Belongs to the bactofilin family. As to quaternary structure, interacts with BacO and BacP, the 3 proteins colocalize as an extended structure.

The protein localises to the cytoplasm. It localises to the cytoskeleton. In terms of biological role, a non-essential component of the chromosome segregation machinery. Positions the ParA-ParB-parS chromosome segregation machinery within the cell; BacP seems to be the most important bactofilin in this process. Forms a heteropolymeric, subpolar scaffold in the cell; BacP probably forms the core, BacO contributes to position and integrity while BacN does not seem to contribute to assembly. This chain is Bactofilin BacN, found in Myxococcus xanthus (strain DK1622).